We begin with the raw amino-acid sequence, 406 residues long: Putative colanic acid biosynthesis glycosyltransferase WcaL (406 aa).

This sequence belongs to the glycosyltransferase group 1 family. Glycosyltransferase 4 subfamily.

Its pathway is slime biogenesis; slime polysaccharide biosynthesis. This chain is Putative colanic acid biosynthesis glycosyltransferase WcaL (wcaL), found in Escherichia coli (strain K12).